Here is a 184-residue protein sequence, read N- to C-terminus: UPF0316 protein BLi00691/BL01474 (184 aa).

3 helical membrane-spanning segments follow: residues 9 to 29 (GVIM…FLTL), 41 to 61 (LAAF…GLVL), and 67 to 87 (IQNV…GTKI).

Belongs to the UPF0316 family.

It localises to the cell membrane. The sequence is that of UPF0316 protein BLi00691/BL01474 from Bacillus licheniformis (strain ATCC 14580 / DSM 13 / JCM 2505 / CCUG 7422 / NBRC 12200 / NCIMB 9375 / NCTC 10341 / NRRL NRS-1264 / Gibson 46).